Here is a 440-residue protein sequence, read N- to C-terminus: Ribosomal protein uS12 methylthiotransferase RimO (440 aa).

Positions 6-116 constitute an MTTase N-terminal domain; that stretch reads PKVGFVSLGC…VVTAVHEVVP (111 aa). Residues C15, C51, C80, C149, C153, and C156 each contribute to the [4Fe-4S] cluster site. The region spanning 135-373 is the Radical SAM core domain; that stretch reads LTPRHYAYLK…MAHQQAISAA (239 aa). The 65-residue stretch at 376 to 440 folds into the TRAM domain; that stretch reads QLKVGKEIEV…DEYDLWAEPV (65 aa).

It belongs to the methylthiotransferase family. RimO subfamily. [4Fe-4S] cluster is required as a cofactor.

It is found in the cytoplasm. The catalysed reaction is L-aspartate(89)-[ribosomal protein uS12]-hydrogen + (sulfur carrier)-SH + AH2 + 2 S-adenosyl-L-methionine = 3-methylsulfanyl-L-aspartate(89)-[ribosomal protein uS12]-hydrogen + (sulfur carrier)-H + 5'-deoxyadenosine + L-methionine + A + S-adenosyl-L-homocysteine + 2 H(+). Its function is as follows. Catalyzes the methylthiolation of an aspartic acid residue of ribosomal protein uS12. This Pseudomonas paraeruginosa (strain DSM 24068 / PA7) (Pseudomonas aeruginosa (strain PA7)) protein is Ribosomal protein uS12 methylthiotransferase RimO.